A 40-amino-acid polypeptide reads, in one-letter code: Antimicrobial peptide 1 (40 aa).

The region spanning 1-40 is the Chitin-binding type-1 domain; the sequence is AQCGAQGGGATCPGGLCCSQWGWCGSTPKYCGAGCQSNCK. 4 disulfide bridges follow: C3/C18, C12/C24, C17/C31, and C35/C39.

Not glycosylated.

Its function is as follows. Antimicrobial peptide active against plant pathogenic fungi and Gram-negative and -positive bacteria. This is Antimicrobial peptide 1 from Fagopyrum esculentum (Common buckwheat).